Consider the following 357-residue polypeptide: UDP-N-acetylglucosamine--N-acetylmuramyl-(pentapeptide) pyrophosphoryl-undecaprenol N-acetylglucosamine transferase (357 aa).

UDP-N-acetyl-alpha-D-glucosamine contacts are provided by residues 12–14 (TGG), Asn-124, Arg-163, Ser-189, Ile-243, 262–267 (ALTVSE), and Gln-288.

It belongs to the glycosyltransferase 28 family. MurG subfamily.

It is found in the cell inner membrane. It carries out the reaction di-trans,octa-cis-undecaprenyl diphospho-N-acetyl-alpha-D-muramoyl-L-alanyl-D-glutamyl-meso-2,6-diaminopimeloyl-D-alanyl-D-alanine + UDP-N-acetyl-alpha-D-glucosamine = di-trans,octa-cis-undecaprenyl diphospho-[N-acetyl-alpha-D-glucosaminyl-(1-&gt;4)]-N-acetyl-alpha-D-muramoyl-L-alanyl-D-glutamyl-meso-2,6-diaminopimeloyl-D-alanyl-D-alanine + UDP + H(+). It functions in the pathway cell wall biogenesis; peptidoglycan biosynthesis. Cell wall formation. Catalyzes the transfer of a GlcNAc subunit on undecaprenyl-pyrophosphoryl-MurNAc-pentapeptide (lipid intermediate I) to form undecaprenyl-pyrophosphoryl-MurNAc-(pentapeptide)GlcNAc (lipid intermediate II). The protein is UDP-N-acetylglucosamine--N-acetylmuramyl-(pentapeptide) pyrophosphoryl-undecaprenol N-acetylglucosamine transferase of Pseudomonas aeruginosa (strain LESB58).